A 1050-amino-acid chain; its full sequence is Probable beta-glucosidase E (1050 aa).

A disordered region spans residues 1–87; that stretch reads MPPPDSNPGS…RSSSTNGGHN (87 aa). The Cytoplasmic portion of the chain corresponds to 1–174; sequence MPPPDSNPGS…VKYARIWRRT (174 aa). Residues 11-20 show a composition bias toward basic and acidic residues; sequence FRDHLKHDNK. Residues 47–56 show a composition bias toward low complexity; the sequence is SPRSASASSS. Over residues 78 to 87 the composition is skewed to polar residues; sequence RSSSTNGGHN. The helical; Signal-anchor for type II membrane protein transmembrane segment at 175 to 195 threads the bilayer; sequence LVVVIVALALLVWGFLRFTAA. Residues 196-1050 lie on the Extracellular side of the membrane; that stretch reads QRQGPKVWPM…SRDLPLQAKY (855 aa). 4 N-linked (GlcNAc...) asparagine glycosylation sites follow: N236, N244, N300, and N430. Residue D458 is part of the active site. N501, N540, N605, N884, N920, N929, and N993 each carry an N-linked (GlcNAc...) asparagine glycan.

This sequence belongs to the glycosyl hydrolase 3 family.

It is found in the cell membrane. The catalysed reaction is Hydrolysis of terminal, non-reducing beta-D-glucosyl residues with release of beta-D-glucose.. It functions in the pathway glycan metabolism; cellulose degradation. Functionally, beta-glucosidases are one of a number of cellulolytic enzymes involved in the degradation of cellulosic biomass. Catalyzes the last step releasing glucose from the inhibitory cellobiose. The polypeptide is Probable beta-glucosidase E (bglE) (Aspergillus clavatus (strain ATCC 1007 / CBS 513.65 / DSM 816 / NCTC 3887 / NRRL 1 / QM 1276 / 107)).